Here is a 266-residue protein sequence, read N- to C-terminus: MTHANTTTPPFIAVVPARLASTRLPNKPLADIGGKPMVVRVAERARESGAQQVLVASDAQAVLDAARAHGFEAVLTRADHPSGTDRLAEVAAQFGWSDDTIVVNVQGDEPLIDPALVCGVASHLAASGGCAIATAAHPITDPAEIFNPNVVKVVLDARGVALYFSRAPIPWARDAYQPHWPNVAAMPTPPAPAVVHRHIGLYAYRAQFLRTYPSLAISPIEQVEALEQLRAMWHGERIAVLVTHDVPLPGVDTPADLARVQALFGS.

It belongs to the KdsB family.

The protein localises to the cytoplasm. It carries out the reaction 3-deoxy-alpha-D-manno-oct-2-ulosonate + CTP = CMP-3-deoxy-beta-D-manno-octulosonate + diphosphate. It participates in nucleotide-sugar biosynthesis; CMP-3-deoxy-D-manno-octulosonate biosynthesis; CMP-3-deoxy-D-manno-octulosonate from 3-deoxy-D-manno-octulosonate and CTP: step 1/1. The protein operates within bacterial outer membrane biogenesis; lipopolysaccharide biosynthesis. In terms of biological role, activates KDO (a required 8-carbon sugar) for incorporation into bacterial lipopolysaccharide in Gram-negative bacteria. The protein is 3-deoxy-manno-octulosonate cytidylyltransferase of Paraburkholderia xenovorans (strain LB400).